A 192-amino-acid chain; its full sequence is Ras-like GTP-binding protein rhoA (192 aa).

12 to 19 is a binding site for GTP; that stretch reads GDGACGKT. Residues 34-42 carry the Effector region motif; the sequence is YVPTVFENY. GTP-binding positions include 59-63 and 117-120; these read DTAGQ and NKRD. A Cysteine methyl ester modification is found at cysteine 189. Cysteine 189 is lipidated: S-geranylgeranyl cysteine. Positions 190–192 are cleaved as a propeptide — removed in mature form; it reads MIL.

This sequence belongs to the small GTPase superfamily. Rho family. As to quaternary structure, may interact with unc-89 (via DN and PH domains). Interacts with bli-3 and memo-1. In larvae and adults, enriched at the tip of the head where the anterior sensory organ is located and in the pharyngeal nerve ring (at protein level). In embryos, enriched at the boundaries of dorsal cells undergoing intercalation, ventral enclosure and elongation.

The protein localises to the cell membrane. Its subcellular location is the cytoplasm. It is found in the cytoskeleton. It localises to the cell cortex. Its activity is regulated as follows. GTP hydrolysis is stimulated by unc-89. In terms of biological role, required for ventral migration of epidermal cells during ventral enclosure in the embryo and for cell elongation. Also required for ventral migration of P cells during larval development. Involved in asymmetric spindle positioning during anaphase and establishment of cell polarity during embryo development. In adults, involved in regulation of multiple processes including locomotion, pharyngeal pumping, fecundity, ovulation, defecation and body morphology. In body wall muscles, regulates organization of myosin thick filaments downstream of unc-89. Association with the oxidase bli-3 promotes ROS production and this interaction may be modulated by memo-1, in order to control the oxidative stress response and longevity. In Caenorhabditis elegans, this protein is Ras-like GTP-binding protein rhoA.